Consider the following 131-residue polypeptide: Large ribosomal subunit protein uL22 (131 aa).

Basic residues predominate over residues 1 to 11 (MAKGHRSKIKR). Positions 1 to 20 (MAKGHRSKIKRERNEVRDTR) are disordered.

This sequence belongs to the universal ribosomal protein uL22 family. In terms of assembly, part of the 50S ribosomal subunit.

In terms of biological role, this protein binds specifically to 23S rRNA; its binding is stimulated by other ribosomal proteins, e.g. L4, L17, and L20. It is important during the early stages of 50S assembly. It makes multiple contacts with different domains of the 23S rRNA in the assembled 50S subunit and ribosome. The globular domain of the protein is located near the polypeptide exit tunnel on the outside of the subunit, while an extended beta-hairpin is found that lines the wall of the exit tunnel in the center of the 70S ribosome. This chain is Large ribosomal subunit protein uL22, found in Agathobacter rectalis (strain ATCC 33656 / DSM 3377 / JCM 17463 / KCTC 5835 / VPI 0990) (Eubacterium rectale).